The primary structure comprises 122 residues: Large ribosomal subunit protein eL18 (122 aa).

It belongs to the eukaryotic ribosomal protein eL18 family.

The sequence is that of Large ribosomal subunit protein eL18 from Pyrobaculum aerophilum (strain ATCC 51768 / DSM 7523 / JCM 9630 / CIP 104966 / NBRC 100827 / IM2).